A 177-amino-acid polypeptide reads, in one-letter code: Trafficking regulator of GLUT4 1 (177 aa).

Topologically, residues Met1–Leu105 are cytoplasmic. Phosphoserine occurs at positions 48, 87, and 88. Residues Glu71 to Thr92 form a disordered region. Residues Ala72–Ser88 are compositionally biased toward low complexity. Residues Ile106 to Ile126 constitute an intramembrane region (helical). The Cytoplasmic portion of the chain corresponds to Ser127 to Ser153. The chain crosses the membrane as a helical span at residues Ile154–Val174. Over Gln175 to Lys177 the chain is Extracellular.

This sequence belongs to the CD225/Dispanin family. As to quaternary structure, interacts with SLC2A4; the interaction is required for proper SLC2A4 reacycling after insulin stimulation. As to expression, expressed at high levels in heart, mammary gland, adrenal gland, stomach, smooth muscle and skeletal muscle, and at lower levels in brain and lung. Strongly down-regulated in lung cancer tissues, due to hypermethylation of the corresponding locus. Expressed in adipose tissue.

The protein resides in the cell membrane. It localises to the endomembrane system. Its subcellular location is the cytoplasm. It is found in the perinuclear region. Its function is as follows. Regulates insulin-mediated adipose tissue glucose uptake and transport by modulation of SLC2A4 recycling. Not required for SLC2A4 membrane fusion upon an initial stimulus, but rather is necessary for proper protein recycling during prolonged insulin stimulation. The protein is Trafficking regulator of GLUT4 1 of Homo sapiens (Human).